A 163-amino-acid polypeptide reads, in one-letter code: MLQLCDSECDGLSSLMECGGAVNSPGDTLGQSPAHLAACGGQAFFLLWQLQTGVDVNQQDCFGEAPIHKAARSGSMECLSLLIASDARIDMCNKDGHTAEDVALSCGFLDCARYLATIKLTQDTFSRAQSSLHNLKETAAGVKRGQCCQSISHGKRRRSDGFV.

ANK repeat units follow at residues 29 to 58 (LGQS…DVNQ), 62 to 91 (FGEA…RIDM), and 95 to 124 (DGHT…TQDT). Positions 129 to 149 (QSSLHNLKETAAGVKRGQCCQ) match the Nuclear localization signal motif.

The protein localises to the nucleus. It is found in the cytoplasm. The chain is Ankyrin repeat domain-containing protein 37 (ankrd37) from Xenopus tropicalis (Western clawed frog).